Here is a 91-residue protein sequence, read N- to C-terminus: Probable Fe(2+)-trafficking protein (91 aa).

It belongs to the Fe(2+)-trafficking protein family.

In terms of biological role, could be a mediator in iron transactions between iron acquisition and iron-requiring processes, such as synthesis and/or repair of Fe-S clusters in biosynthetic enzymes. This Burkholderia cenocepacia (strain ATCC BAA-245 / DSM 16553 / LMG 16656 / NCTC 13227 / J2315 / CF5610) (Burkholderia cepacia (strain J2315)) protein is Probable Fe(2+)-trafficking protein.